Consider the following 123-residue polypeptide: Large ribosomal subunit protein uL18 (123 aa).

This sequence belongs to the universal ribosomal protein uL18 family. In terms of assembly, part of the 50S ribosomal subunit; part of the 5S rRNA/L5/L18/L25 subcomplex. Contacts the 5S and 23S rRNAs.

In terms of biological role, this is one of the proteins that bind and probably mediate the attachment of the 5S RNA into the large ribosomal subunit, where it forms part of the central protuberance. The protein is Large ribosomal subunit protein uL18 of Chlamydia felis (strain Fe/C-56) (Chlamydophila felis).